A 193-amino-acid chain; its full sequence is Dual-action ribosomal maturation protein DarP (193 aa).

The span at Met1–Glu10 shows a compositional bias: basic and acidic residues. 2 disordered regions span residues Met1–Arg20 and Ser170–Glu193. The span at Gly181–Glu193 shows a compositional bias: acidic residues.

Belongs to the DarP family.

It localises to the cytoplasm. Its function is as follows. Member of a network of 50S ribosomal subunit biogenesis factors which assembles along the 30S-50S interface, preventing incorrect 23S rRNA structures from forming. Promotes peptidyl transferase center (PTC) maturation. The chain is Dual-action ribosomal maturation protein DarP from Xanthomonas campestris pv. campestris (strain 8004).